Consider the following 212-residue polypeptide: MNSQQCVIIGIAGASASGKSLIAKTIFEELCRDLGTNQIGVINEDAYYHDQSHLTMEDRVKTNYDHPKALDHQLLASHLTQLKQGEPVSIPCYSYTEHTRISDTLTMQPKKVIILEGILLLTNPKLRDLMDASVFMDTPLDICFLRRLTRDVAERGRTMESVISQYKRTVRPMFLQFIEPSKQYADIIVPRGGKNRIATDILKARIQHLLAK.

13-20 serves as a coordination point for ATP; that stretch reads GASASGKS.

This sequence belongs to the uridine kinase family.

It localises to the cytoplasm. It catalyses the reaction uridine + ATP = UMP + ADP + H(+). The catalysed reaction is cytidine + ATP = CMP + ADP + H(+). It functions in the pathway pyrimidine metabolism; CTP biosynthesis via salvage pathway; CTP from cytidine: step 1/3. It participates in pyrimidine metabolism; UMP biosynthesis via salvage pathway; UMP from uridine: step 1/1. The chain is Uridine kinase from Shewanella frigidimarina (strain NCIMB 400).